A 68-amino-acid chain; its full sequence is Conotoxin TsMMSK-021 (68 aa).

A signal peptide spans 1 to 20; sequence MMSKLGVLLTICLLLFPLTA. The propeptide occupies 21 to 50; it reads VPLDGDQHADRPADRMQDISSEQHPLFDPV. 3 cysteine pairs are disulfide-bonded: Cys53-Cys66, Cys54-Cys62, and Cys58-Cys65. Pro64 carries the 4-hydroxyproline modification.

The protein belongs to the conotoxin M superfamily. As to expression, expressed by the venom duct.

Its subcellular location is the secreted. The sequence is that of Conotoxin TsMMSK-021 from Conus tessulatus (Tessellate cone).